The following is a 1827-amino-acid chain: Sucrase-isomaltase, intestinal (1827 aa).

Topologically, residues alanine 2–serine 12 are cytoplasmic. The residue at position 7 (serine 7) is a Phosphoserine; by PKA. A helical; Signal-anchor for type II membrane protein membrane pass occupies residues leucine 13–alanine 32. Over threonine 33 to serine 1827 the chain is Lumenal. The tract at residues glutamate 40–glycine 61 is disordered. A compositionally biased stretch (low complexity) spans threonine 45 to threonine 55. Residues glycine 61 to aspartate 110 enclose the P-type 1 domain. 3 disulfide bridges follow: cysteine 63–cysteine 94, cysteine 77–cysteine 93, and cysteine 88–cysteine 106. N-linked (GlcNAc...) asparagine glycosylation is present at asparagine 99. The segment at aspartate 110 to arginine 1007 is isomaltase. Residues tyrosine 237 and tyrosine 239 each carry the sulfotyrosine modification. Substrate-binding residues include aspartate 264 and aspartate 388. 2 positions are modified to sulfotyrosine: tyrosine 391 and tyrosine 400. N-linked (GlcNAc...) asparagine glycosylation is found at asparagine 437 and asparagine 455. The active-site Nucleophile; for isomaltase activity is aspartate 505. Cysteine 520 and cysteine 545 form a disulfide bridge. Substrate is bound at residue arginine 588. Aspartate 604 functions as the For isomaltase activity in the catalytic mechanism. A disulfide bond links cysteine 635 and cysteine 646. A substrate-binding site is contributed by histidine 662. Sulfotyrosine is present on residues tyrosine 667, tyrosine 763, and tyrosine 765. N-linked (GlcNAc...) asparagine glycans are attached at residues asparagine 823, asparagine 855, asparagine 904, and asparagine 926. Residues asparagine 932–arginine 978 form the P-type 2 domain. Residues isoleucine 1008–serine 1827 form a sucrase region. Residues asparagine 1235, asparagine 1303, asparagine 1340, and asparagine 1354 are each glycosylated (N-linked (GlcNAc...) asparagine). Aspartate 1394 functions as the Nucleophile; for sucrase activity in the catalytic mechanism. Glutamate 1397 (for sucrase activity) is an active-site residue. Asparagine 1403 carries N-linked (GlcNAc...) asparagine glycosylation. The Proton donor; for isomaltase activity role is filled by aspartate 1500. Residues asparagine 1535, asparagine 1572, asparagine 1675, asparagine 1748, asparagine 1763, and asparagine 1815 are each glycosylated (N-linked (GlcNAc...) asparagine).

It belongs to the glycosyl hydrolase 31 family. The resulting sucrase and isomaltase subunits stay associated with one another in a complex by non-covalent linkages. In terms of processing, the precursor is proteolytically cleaved when exposed to pancreatic proteases in the intestinal lumen. Post-translationally, sulfated. As to expression, expressed in the poorly differentiated crypt cells of the small intestine as well as in the mature villous cells. Expressed at very low levels in the colon.

It localises to the apical cell membrane. The enzyme catalyses Hydrolysis of sucrose and maltose by an alpha-D-glucosidase-type action.. It catalyses the reaction Hydrolysis of (1-&gt;6)-alpha-D-glucosidic linkages in some oligosaccharides produced from starch and glycogen by alpha-amylase, and in isomaltose.. Plays an important role in the final stage of carbohydrate digestion. Isomaltase activity is specific for both alpha-1,4- and alpha-1,6-oligosaccharides. This is Sucrase-isomaltase, intestinal (SI) from Homo sapiens (Human).